A 547-amino-acid chain; its full sequence is Chaperonin GroEL (547 aa).

Residues 30–33 (TLGP), Lys51, 87–91 (DGTTT), Gly415, and Asp496 each bind ATP. The interval 528 to 547 (KEGAGAGGGMPDMGGMGGMM) is disordered. Gly residues predominate over residues 531 to 547 (AGAGGGMPDMGGMGGMM).

It belongs to the chaperonin (HSP60) family. As to quaternary structure, forms a cylinder of 14 subunits composed of two heptameric rings stacked back-to-back. Interacts with the co-chaperonin GroES.

The protein resides in the cytoplasm. It carries out the reaction ATP + H2O + a folded polypeptide = ADP + phosphate + an unfolded polypeptide.. Its function is as follows. Together with its co-chaperonin GroES, plays an essential role in assisting protein folding. The GroEL-GroES system forms a nano-cage that allows encapsulation of the non-native substrate proteins and provides a physical environment optimized to promote and accelerate protein folding. In Dinoroseobacter shibae (strain DSM 16493 / NCIMB 14021 / DFL 12), this protein is Chaperonin GroEL.